We begin with the raw amino-acid sequence, 597 residues long: MPDLSLFGHDPFWLVVAKSVFLFVYIILIPLVAVLAERKVVARMQMRVGPNRVGPFGSLQSIADGVKMAFKEDLVPAIVDKPIYLLAPVVSVIPAFMAFAVIPLGGEVSVAGNTTALQLTDMPVGVLYILAITSIGVYGIVLAGWASGSTYPLLGGLRSTAQVISYEIAMALCFAAVFLHAGTMATSGIVGAQHPTWFVFLLLPSFLIYCVSMVGETNRAPFDLPEAEGELVGGFHTEYSSLKFAMFMLAEYVNMGTVSALATTLFLGGWSAPWPFNLIPGADAGWWGLLWFTAKVWTFMFVFVWLRGTLPRLRYDQFMRLGWQLLIPVSLLWVMLVATARLLRADGHAWATGAQVVVGVALTAAMIGLFLRAGRRPAAPPEPEPEPSGEAVFLGFPTPPVPADAHRVDNPKGGLLEPLAGFAVTAATMFKKPNTEFYPEQKVPTAPRYHGRHQLNRHPDGLEKCIGCELCAWACPADAIYVEGADNTEDERYSPGERYGRVYQINYLRCIGCGLCIEACPTRALTMTNDYELTDDNRADLIYEKDRLLAPLAPGMVAPPPAMAPGTTEADYYLGAVTGGAPAAEQPAPAGAKGGAR.

The NADH-quinone oxidoreductase subunit H stretch occupies residues 1–405 (MPDLSLFGHD…FPTPPVPADA (405 aa)). 9 consecutive transmembrane segments (helical) span residues 12–32 (FWLV…IPLV), 82–102 (PIYL…FAVI), 124–144 (VGVL…VLAG), 170–190 (MALC…SGIV), 195–215 (PTWF…SMVG), 260–280 (ALAT…NLIP), 286–306 (WWGL…FVWL), 318–338 (FMRL…MLVA), and 351–371 (ATGA…GLFL). Positions 406–597 (HRVDNPKGGL…APAGAKGGAR (192 aa)) are NADH-quinone oxidoreductase subunit I. 4Fe-4S ferredoxin-type domains lie at 455–485 (LNRH…VEGA) and 501–530 (RVYQ…MTND). Positions 465, 468, 471, 475, 510, 513, 516, and 520 each coordinate [4Fe-4S] cluster.

This sequence in the N-terminal section; belongs to the complex I subunit 1 family. The protein in the C-terminal section; belongs to the complex I 23 kDa subunit family. NDH-1 is composed of 13 different subunits. Subunits NuoA, H/I, J, K, L, M, N constitute the membrane sector of the complex. [4Fe-4S] cluster is required as a cofactor.

It localises to the cell membrane. It carries out the reaction a quinone + NADH + 5 H(+)(in) = a quinol + NAD(+) + 4 H(+)(out). Its function is as follows. NDH-1 shuttles electrons from NADH, via FMN and iron-sulfur (Fe-S) centers, to quinones in the respiratory chain. The immediate electron acceptor for the enzyme in this species is believed to be ubiquinone. Couples the redox reaction to proton translocation (for every two electrons transferred, four hydrogen ions are translocated across the cytoplasmic membrane), and thus conserves the redox energy in a proton gradient. This subunit may bind ubiquinone. In Nocardia farcinica (strain IFM 10152), this protein is NADH-quinone oxidoreductase subunits H/I (nuoH/I).